The sequence spans 695 residues: Elongation factor G (695 aa).

The 275-residue stretch at aspartate 12–leucine 286 folds into the tr-type G domain. GTP is bound by residues alanine 21–threonine 28, aspartate 85–histidine 89, and asparagine 139–aspartate 142.

The protein belongs to the TRAFAC class translation factor GTPase superfamily. Classic translation factor GTPase family. EF-G/EF-2 subfamily.

The protein localises to the cytoplasm. Its function is as follows. Catalyzes the GTP-dependent ribosomal translocation step during translation elongation. During this step, the ribosome changes from the pre-translocational (PRE) to the post-translocational (POST) state as the newly formed A-site-bound peptidyl-tRNA and P-site-bound deacylated tRNA move to the P and E sites, respectively. Catalyzes the coordinated movement of the two tRNA molecules, the mRNA and conformational changes in the ribosome. In Thermotoga petrophila (strain ATCC BAA-488 / DSM 13995 / JCM 10881 / RKU-1), this protein is Elongation factor G.